Reading from the N-terminus, the 556-residue chain is uncharacterized protein (556 aa).

Disordered regions lie at residues 1–40, 80–243, 278–324, 363–391, and 422–525; these read MSNSDKNNNNNTNNNNNNNNNNNGNFGIWEEPDDDSTNEN, NTTQ…KQSW, YDSD…SSLP, RTKQIKKVQQQQQQSSKSKPNNNNNKFVD, and DSKQ…ENSA. A compositionally biased stretch (low complexity) spans 7-25; that stretch reads NNNNNTNNNNNNNNNNNGN. Over residues 30-40 the composition is skewed to acidic residues; sequence EEPDDDSTNEN. 2 stretches are compositionally biased toward low complexity: residues 80-133 and 164-181; these read NTTQ…GTRS and NDNNDNKNNNKNNNNDSN. Residues 182-192 are compositionally biased toward acidic residues; that stretch reads IVDDDEDEEEF. Positions 207–226 are enriched in low complexity; it reads STSSPSSTSSPIVSPQTQTS. Over residues 227-243 the composition is skewed to polar residues; it reads KLESSMDVSPSSGKQSW. Low complexity-rich tracts occupy residues 292-322, 369-388, and 425-525; these read NNSSTTTNNNNNNNNNTTTTTTTTTTTNSSS, KVQQQQQQSSKSKPNNNNNK, and QQNV…ENSA. The chain crosses the membrane as a helical span at residues 528-548; the sequence is GSFIKNAVIFIFILLLMVVGF.

The protein resides in the membrane. This is an uncharacterized protein from Dictyostelium discoideum (Social amoeba).